Here is a 368-residue protein sequence, read N- to C-terminus: Protein ALTERED XYLOGLUCAN 9 (368 aa).

Over 1 to 32 (MLGAIHLGVLAACFVLFVPMAMAGWHLSRNKM) the chain is Cytoplasmic. Residues 33–53 (LFFSGALFISLAVCVHLTPYF) form a helical membrane-spanning segment. The Lumenal portion of the chain corresponds to 54–368 (PSVSDIVASV…ALLIESHQSL (315 aa)). N99, N137, and N235 each carry an N-linked (GlcNAc...) asparagine glycan.

It localises to the golgi apparatus membrane. In terms of biological role, component of the plant cell wall polysaccharide acetylation pathway. Does not directly catalyze O-acetylation of xyloglucan but exhibits weak acetylesterase activity in vitro. This is Protein ALTERED XYLOGLUCAN 9 from Arabidopsis thaliana (Mouse-ear cress).